A 299-amino-acid polypeptide reads, in one-letter code: Recombination-associated protein RdgC (299 aa).

This sequence belongs to the RdgC family.

The protein localises to the cytoplasm. The protein resides in the nucleoid. Functionally, may be involved in recombination. The sequence is that of Recombination-associated protein RdgC from Cupriavidus necator (strain ATCC 17699 / DSM 428 / KCTC 22496 / NCIMB 10442 / H16 / Stanier 337) (Ralstonia eutropha).